We begin with the raw amino-acid sequence, 1594 residues long: RB1-inducible coiled-coil protein 1 (1594 aa).

Phosphoserine occurs at positions 222, 229, and 237. Phosphothreonine is present on Thr238. Phosphoserine occurs at positions 243, 253, 257, 261, and 266. The short motif at 566-569 (KPRK) is the Nuclear localization signal element. 10 positions are modified to phosphoserine: Ser624, Ser647, Ser650, Ser652, Ser653, Ser734, Ser1091, Ser1222, Ser1370, and Ser1484. Residues 638-673 (EQKASVSQTSPQSASSPRMESTAGITTTTSPRTPPP) form a disordered region. A compositionally biased stretch (low complexity) spans 641 to 654 (ASVSQTSPQSASSP). The FFAT motif lies at 731–737 (DFMSAVN). Coiled-coil stretches lie at residues 859 to 1397 (LKEK…SSSF) and 1438 to 1485 (METS…SQSM).

The protein belongs to the ATG17 family. In terms of assembly, part of a complex consisting of ATG13/KIAA0652, ULK1 and RB1CC1. This complex associates with ATG101. Interacts with PTK2/FAK1 and PTK2B/PYK2. Interacts with GABARAP and GABARAPL1. Interacts with ATG16L1; the interaction is required for ULK1 complex-dependent autophagy. Interacts with RNF111, SKI and SMAD7. Interacts with COP1 in the cytoplasm of proliferating cells in response to UV stimulation. Interacts with TP53. Interacts with C9orf72. Interacts with WDR45B. Interacts with ATG13; this interaction is increased in the absence of TMEM39A. Interacts with WIPI2. Interacts with TAX1BP1. Interacts (via phosphorylated FFAT motif) with MOSPD2, VAPA and VAPB. Post-translationally, phosphorylation at Ser-734 of the FFAT motif activates interaction with MOSPD2, VAPA and VAPB. As to expression, expression levels correlated closely with those of RB1 in cancer cell lines as well as in various normal human tissues. Abundantly expressed in human musculoskeletal and cultured osteosarcoma cells.

Its subcellular location is the nucleus. It is found in the cytoplasm. It localises to the cytosol. The protein resides in the preautophagosomal structure. The protein localises to the lysosome. Its function is as follows. Involved in autophagy. Regulates early events but also late events of autophagosome formation through direct interaction with Atg16L1. Required for the formation of the autophagosome-like double-membrane structure that surrounds the Salmonella-containing vacuole (SCV) during S.typhimurium infection and subsequent xenophagy. Involved in repair of DNA damage caused by ionizing radiation, which subsequently improves cell survival by decreasing apoptosis. Inhibits PTK2/FAK1 and PTK2B/PYK2 kinase activity, affecting their downstream signaling pathways. Plays a role as a modulator of TGF-beta-signaling by restricting substrate specificity of RNF111. Functions as a DNA-binding transcription factor. Is a potent regulator of the RB1 pathway through induction of RB1 expression. Plays a crucial role in muscular differentiation. Plays an indispensable role in fetal hematopoiesis and in the regulation of neuronal homeostasis. The sequence is that of RB1-inducible coiled-coil protein 1 from Homo sapiens (Human).